The primary structure comprises 109 residues: Small ribosomal subunit protein uS10 (109 aa).

This sequence belongs to the universal ribosomal protein uS10 family. Part of the 30S ribosomal subunit.

Involved in the binding of tRNA to the ribosomes. The sequence is that of Small ribosomal subunit protein uS10 from Nanoarchaeum equitans (strain Kin4-M).